The chain runs to 179 residues: Stathmin-2 (179 aa).

The membrane attachment stretch occupies residues 1–26 (MAKTAMAYKEKMKELSMLSLICSCFY). Phosphoserine is present on residues serine 16, serine 50, serine 62, serine 73, serine 80, and serine 97. The SLD domain occupies 38 to 179 (DDMEVKQINK…NKELQVELSG (142 aa)). Residues 39–96 (DMEVKQINKRASGQAFELILKPPSPVSEAPRTLASPKKKELSLEEIQKKLEAAEERRK) are regulatory/phosphorylation domain. A coiled-coil region spans residues 74 to 179 (PKKKELSLEE…NKELQVELSG (106 aa)).

The protein belongs to the stathmin family. In terms of tissue distribution, expression is neuron-specific and found in cerebellum, forebrain, midbrain, tectum and spinal cord.

It localises to the cytoplasm. It is found in the perinuclear region. The protein resides in the cell projection. Its subcellular location is the growth cone. The protein localises to the membrane. It localises to the axon. It is found in the lamellipodium. Its function is as follows. Is a key regulator of neurite extension through regulation of microtubule instabilily. The sequence is that of Stathmin-2 (STMN2) from Gallus gallus (Chicken).